A 1515-amino-acid polypeptide reads, in one-letter code: Adhesion G protein-coupled receptor L1 (1515 aa).

Positions M1–G24 are cleaved as a signal peptide. Residues L25 to L857 are Extracellular-facing. The region spanning A40–V129 is the SUEL-type lectin domain. 5 cysteine pairs are disulfide-bonded: C41-C71, C50-C128, C83-C115, C96-C102, and C140-C322. E42 lines the alpha-L-rhamnose pocket. An N-linked (GlcNAc...) asparagine glycan is attached at N98. An alpha-L-rhamnose-binding site is contributed by G117–K120. One can recognise an Olfactomedin-like domain in the interval V139–P398. The tract at residues D400–P468 is disordered. Low complexity predominate over residues P405–T441. Residues D453–P468 are compositionally biased toward pro residues. 2 disulfide bridges follow: C480/C515 and C503/C532. Residues N531, N640, N741, N800, N805, and N826 are each glycosylated (N-linked (GlcNAc...) asparagine). Positions P669–Y850 constitute a GAIN-B domain. Disulfide bonds link C801-C832 and C820-C834. The interval C801–Y850 is GPS. The helical transmembrane segment at L858–I878 threads the bilayer. Residues S879 to N892 are Cytoplasmic-facing. A helical membrane pass occupies residues T893–I913. Topologically, residues D914–E919 are extracellular. Residues V920–L940 traverse the membrane as a helical segment. At C941 to Y964 the chain is on the cytoplasmic side. The chain crosses the membrane as a helical span at residues Y965–Y985. Residues R986–Y1001 are Extracellular-facing. The chain crosses the membrane as a helical span at residues F1002–M1022. Residues V1023–A1049 are Cytoplasmic-facing. A helical membrane pass occupies residues L1050–I1070. The Extracellular portion of the chain corresponds to N1071–S1074. The helical transmembrane segment at V1075–F1095 threads the bilayer. At H1096–L1515 the chain is on the cytoplasmic side. A disordered region spans residues T1144–T1184. Residue R1237 is modified to Omega-N-methylarginine. S1263 carries the post-translational modification Phosphoserine. Disordered regions lie at residues F1291–N1316, R1337–A1369, E1401–P1470, and Y1492–L1515. 2 stretches are compositionally biased toward pro residues: residues G1345–P1356 and A1449–P1461. A phosphoserine mark is found at S1497 and S1514.

It belongs to the G-protein coupled receptor 2 family. Adhesion G-protein coupled receptor (ADGR) subfamily. As to quaternary structure, forms a heterodimer, consisting of a large extracellular region (p120) non-covalently linked to a seven-transmembrane moiety (p85). Interacts with syntaxin and with proteins of the SHANK family via the PDZ domain. Isoform 2 interacts with TENM2. Interacts (via extracellular domain) with FLRT1, FLRT2 and FLRT3 (via extracellular domain). Autoproteolytically cleaved into 2 subunits, an extracellular subunit and a seven-transmembrane subunit. This proteolytic processing takes place early in the biosynthetic pathway, either in the endoplasmic reticulum or in the early compartment of the Golgi apparatus. In terms of tissue distribution, expressed in the brain (at protein level). Brain specific distribution but low levels are also detected in most tissues.

The protein localises to the cell membrane. It localises to the cell projection. Its subcellular location is the axon. It is found in the growth cone. The protein resides in the synapse. The protein localises to the presynaptic cell membrane. It localises to the synaptosome. Calcium-independent receptor of high affinity for alpha-latrotoxin, an excitatory neurotoxin present in black widow spider venom which triggers massive exocytosis from neurons and neuroendocrine cells. Receptor probably implicated in the regulation of exocytosis. Its function is as follows. Receptor for TENM2 that mediates heterophilic synaptic cell-cell contact and postsynaptic specialization. This is Adhesion G protein-coupled receptor L1 from Rattus norvegicus (Rat).